The following is a 552-amino-acid chain: Ferry endosomal RAB5 effector complex subunit 3 (552 aa).

A disordered region spans residues 383–403 (LKESLDSGNQNGGNDDKTKNA).

In terms of assembly, component of the FERRY complex composed of five subunits, TBCK, PPP1R21, FERRY3, CRYZL1 and GATD1 with a ratio of 1:2:1:2:4, respectively.

It localises to the cytoplasm. It is found in the early endosome. Component of the FERRY complex (Five-subunit Endosomal Rab5 and RNA/ribosome intermediary). The FERRY complex directly interacts with mRNAs and RAB5A, and functions as a RAB5A effector involved in the localization and the distribution of specific mRNAs most likely by mediating their endosomal transport. The complex recruits mRNAs and ribosomes to early endosomes through direct mRNA-interaction. Plays a role in mast cell degranulation. In Homo sapiens (Human), this protein is Ferry endosomal RAB5 effector complex subunit 3.